Here is a 144-residue protein sequence, read N- to C-terminus: 3-dehydroquinate dehydratase (144 aa).

Catalysis depends on Tyr-22, which acts as the Proton acceptor. Substrate contacts are provided by Asn-74, His-80, and Asp-87. His-100 (proton donor) is an active-site residue. Substrate contacts are provided by residues 101–102 and Arg-111; that span reads LS.

This sequence belongs to the type-II 3-dehydroquinase family. Homododecamer.

The catalysed reaction is 3-dehydroquinate = 3-dehydroshikimate + H2O. It functions in the pathway metabolic intermediate biosynthesis; chorismate biosynthesis; chorismate from D-erythrose 4-phosphate and phosphoenolpyruvate: step 3/7. Its function is as follows. Catalyzes a trans-dehydration via an enolate intermediate. This Clostridium perfringens (strain ATCC 13124 / DSM 756 / JCM 1290 / NCIMB 6125 / NCTC 8237 / Type A) protein is 3-dehydroquinate dehydratase.